The chain runs to 68 residues: Tau-scoloptoxin(04)-Ssm1b (68 aa).

The N-terminal stretch at 1-25 (MLKSFCILSVFMVLFLAKFPDLCSG) is a signal peptide. A propeptide spanning residues 26–36 (EEISPLKIVVR) is cleaved from the precursor. 2 disulfide bridges follow: Cys-45-Cys-56 and Cys-50-Cys-63. The interval 55 to 67 (RCSIVDKQCIKKE) is highly charged C-terminal region, binds to TRPV1 channel.

This sequence belongs to the scoloptoxin-04 family. In terms of tissue distribution, expressed by the venom gland.

The protein localises to the secreted. In terms of biological role, extremely potent agonist and potentiator of TRPV1 (EC(50)=470-521.5 nM (mouse)). It strongly promotes the heat activation process by downshifting the activation threshold temperature. It preferably binds to the activated channel and promotes its opening. Holding the channel closed by cooling prevents binding of this toxin, leaving it ineffective. The toxin binds to the charge-rich outer pore region of the channel where it directly interacts with the pore helix and turret, two adjacent structural elements known to be critical for activation gating of TRPV1. In comparison with Sm1b, induces a TRPV1 desensitization with slower kinetics (20 seconds). In vivo, induces pain in mice after intraplantar injection. Potent agonist and probable potentiator of TRPV1 (EC(50)=38.35 uM (mouse)). Also binds to the outer pore region of TRPV1. In comparison with Sm1a, induces a TRPV1 desensitization with faster kinetics (2 seconds) and leads to a more complete TRPV1 desensitization. Desensitization is achieved by reducing both the open probability and the single-channel conductance upon prolonged exposure. This is Tau-scoloptoxin(04)-Ssm1b from Scolopendra mutilans (Chinese red-headed centipede).